The sequence spans 101 residues: Putative regulatory protein PrgT (101 aa).

Might be involved in the expression of prgA, but is not required for activation of the expression of prgB. The chain is Putative regulatory protein PrgT (prgT) from Enterococcus faecalis (strain ATCC 47077 / OG1RF).